Here is a 604-residue protein sequence, read N- to C-terminus: Linalool synthase Tps-5073L4, chloroplastic (604 aa).

The N-terminal 36 residues, 1 to 36 (MSSMRIYVAIMKKPSVKHVDYVDKKASKPSWRVSSS), are a transit peptide targeting the chloroplast. (2E)-geranyl diphosphate is bound by residues Arg323, Asp360, Asp364, Arg501, and Asp504. Mg(2+) contacts are provided by Asp360 and Asp364. The DDXXD motif signature appears at 360-364 (DDVYD). The Mg(2+) site is built by Asp504, Thr508, and Glu512.

This sequence belongs to the terpene synthase family. Tpsb subfamily. Monomer. Mg(2+) serves as cofactor. Mn(2+) is required as a cofactor.

The protein localises to the plastid. It is found in the chloroplast. The catalysed reaction is (2E)-geranyl diphosphate + H2O = linalool + diphosphate. It functions in the pathway secondary metabolite biosynthesis; terpenoid biosynthesis. Monoterpene synthase (mono-TPS) involved in the biosynthesis of monoterpenes natural products. Catalyzes the conversion of (2E)-geranyl diphosphate (GPP) into linalool. The sequence is that of Linalool synthase Tps-5073L4, chloroplastic from Perilla frutescens (Beefsteak mint).